We begin with the raw amino-acid sequence, 220 residues long: Urease accessory protein UreG (220 aa).

Position 18 to 25 (18 to 25 (GPVGSGKT)) interacts with GTP.

This sequence belongs to the SIMIBI class G3E GTPase family. UreG subfamily. In terms of assembly, homodimer. UreD, UreF and UreG form a complex that acts as a GTP-hydrolysis-dependent molecular chaperone, activating the urease apoprotein by helping to assemble the nickel containing metallocenter of UreC. The UreE protein probably delivers the nickel.

The protein localises to the cytoplasm. Its function is as follows. Facilitates the functional incorporation of the urease nickel metallocenter. This process requires GTP hydrolysis, probably effectuated by UreG. This chain is Urease accessory protein UreG, found in Yersinia pestis.